Here is a 97-residue protein sequence, read N- to C-terminus: MEPQEVAAAAGVHPIELCVYSILSNNLDGIYQSVNDLRESQALLVVRLKQIRNLLKEEQEYYNEEEGLGVERERLEELELRVEKLTQKYKKLLADCV.

Residues 45–97 adopt a coiled-coil conformation; it reads VVRLKQIRNLLKEEQEYYNEEEGLGVERERLEELELRVEKLTQKYKKLLADCV.

The protein belongs to the SNAPIN family. As to quaternary structure, component of the biogenesis of lysosome-related organelles complex-1 (BLOC-1).

Its subcellular location is the endosome. Component of the biogenesis of lysosome-related organelles complex-1 (BLOC-1), a complex involved in endosomal cargo sorting. The protein is Biogenesis of lysosome-related organelles complex 1 subunit SNN1 (SNN1) of Lachancea thermotolerans (strain ATCC 56472 / CBS 6340 / NRRL Y-8284) (Yeast).